The chain runs to 306 residues: Tyrosine recombinase XerC (306 aa).

The Core-binding (CB) domain maps to 10-94 (ARCHSYLQQF…AVKQWGEFLL (85 aa)). The region spanning 115 to 294 (PLPKNIDVDS…DFQHLAKVYD (180 aa)) is the Tyr recombinase domain. Active-site residues include R154, K178, H246, R249, and H272. The active-site O-(3'-phospho-DNA)-tyrosine intermediate is the Y281.

The protein belongs to the 'phage' integrase family. XerC subfamily. Forms a cyclic heterotetrameric complex composed of two molecules of XerC and two molecules of XerD.

The protein resides in the cytoplasm. Its function is as follows. Site-specific tyrosine recombinase, which acts by catalyzing the cutting and rejoining of the recombining DNA molecules. The XerC-XerD complex is essential to convert dimers of the bacterial chromosome into monomers to permit their segregation at cell division. It also contributes to the segregational stability of plasmids. This Shewanella oneidensis (strain ATCC 700550 / JCM 31522 / CIP 106686 / LMG 19005 / NCIMB 14063 / MR-1) protein is Tyrosine recombinase XerC.